Here is a 138-residue protein sequence, read N- to C-terminus: Small ribosomal subunit protein uS11B (138 aa).

Residues 118–138 are disordered; sequence DVTPVPSDSTRKKGGRRGRRL. The segment covering 129 to 138 has biased composition (basic residues); that stretch reads KKGGRRGRRL.

This sequence belongs to the universal ribosomal protein uS11 family. In terms of assembly, component of the small ribosomal subunit (SSU). Mature yeast ribosomes consist of a small (40S) and a large (60S) subunit. The 40S small subunit contains 1 molecule of ribosomal RNA (18S rRNA) and 33 different proteins (encoded by 57 genes). The large 60S subunit contains 3 rRNA molecules (25S, 5.8S and 5S rRNA) and 46 different proteins (encoded by 81 genes). uS11 interacts with eS1 forming part of the mRNA exit tunnel. uS11 interacts with snoRNA U3. uS11 interacts with MPP10. Component of the ribosomal small subunit (SSU) processome composed of at least 40 protein subunits and snoRNA U3.

The protein localises to the cytoplasm. Its subcellular location is the nucleus. It is found in the nucleolus. Its function is as follows. Component of the ribosome, a large ribonucleoprotein complex responsible for the synthesis of proteins in the cell. The small ribosomal subunit (SSU) binds messenger RNAs (mRNAs) and translates the encoded message by selecting cognate aminoacyl-transfer RNA (tRNA) molecules. The large subunit (LSU) contains the ribosomal catalytic site termed the peptidyl transferase center (PTC), which catalyzes the formation of peptide bonds, thereby polymerizing the amino acids delivered by tRNAs into a polypeptide chain. The nascent polypeptides leave the ribosome through a tunnel in the LSU and interact with protein factors that function in enzymatic processing, targeting, and the membrane insertion of nascent chains at the exit of the ribosomal tunnel. uS11 is involved in nucleolar processing of pre-18S ribosomal RNA and ribosome assembly. This is Small ribosomal subunit protein uS11B from Saccharomyces cerevisiae (strain ATCC 204508 / S288c) (Baker's yeast).